Here is a 129-residue protein sequence, read N- to C-terminus: Small ribosomal subunit protein uS8 (129 aa).

The protein belongs to the universal ribosomal protein uS8 family. In terms of assembly, part of the 30S ribosomal subunit. Contacts proteins S5 and S12.

Its function is as follows. One of the primary rRNA binding proteins, it binds directly to 16S rRNA central domain where it helps coordinate assembly of the platform of the 30S subunit. The sequence is that of Small ribosomal subunit protein uS8 from Legionella pneumophila (strain Corby).